The primary structure comprises 216 residues: Large ribosomal subunit protein uL24m (216 aa).

The transit peptide at Met-1–Met-9 directs the protein to the mitochondrion. In terms of domain architecture, KOW spans Tyr-56–Asp-89.

It belongs to the universal ribosomal protein uL24 family. As to quaternary structure, component of the mitochondrial ribosome large subunit (39S) which comprises a 16S rRNA and about 50 distinct proteins. Ubiquitous. Expressed at greater levels in the kidney, adipose tissue, muscle and liver than the brain, heart, ovary and lung.

Its subcellular location is the mitochondrion. The chain is Large ribosomal subunit protein uL24m (mrpl24) from Xenopus laevis (African clawed frog).